The sequence spans 365 residues: Histidinol-phosphate aminotransferase 2 (365 aa).

At lysine 226 the chain carries N6-(pyridoxal phosphate)lysine.

The protein belongs to the class-II pyridoxal-phosphate-dependent aminotransferase family. Histidinol-phosphate aminotransferase subfamily. Homodimer. The cofactor is pyridoxal 5'-phosphate.

It carries out the reaction L-histidinol phosphate + 2-oxoglutarate = 3-(imidazol-4-yl)-2-oxopropyl phosphate + L-glutamate. It participates in amino-acid biosynthesis; L-histidine biosynthesis; L-histidine from 5-phospho-alpha-D-ribose 1-diphosphate: step 7/9. This is Histidinol-phosphate aminotransferase 2 (hisC2) from Pasteurella multocida (strain Pm70).